We begin with the raw amino-acid sequence, 416 residues long: D-amino acid dehydrogenase (416 aa).

Residue 3 to 17 (VIVLGAGIVGVTSAY) coordinates FAD.

Belongs to the DadA oxidoreductase family. It depends on FAD as a cofactor.

The catalysed reaction is a D-alpha-amino acid + A + H2O = a 2-oxocarboxylate + AH2 + NH4(+). The protein operates within amino-acid degradation; D-alanine degradation; NH(3) and pyruvate from D-alanine: step 1/1. Its function is as follows. Oxidative deamination of D-amino acids. This Rhizobium johnstonii (strain DSM 114642 / LMG 32736 / 3841) (Rhizobium leguminosarum bv. viciae) protein is D-amino acid dehydrogenase.